Here is a 353-residue protein sequence, read N- to C-terminus: Phosphate acyltransferase (353 aa).

It belongs to the PlsX family. As to quaternary structure, homodimer. Probably interacts with PlsY.

It is found in the cytoplasm. The catalysed reaction is a fatty acyl-[ACP] + phosphate = an acyl phosphate + holo-[ACP]. The protein operates within lipid metabolism; phospholipid metabolism. Functionally, catalyzes the reversible formation of acyl-phosphate (acyl-PO(4)) from acyl-[acyl-carrier-protein] (acyl-ACP). This enzyme utilizes acyl-ACP as fatty acyl donor, but not acyl-CoA. The chain is Phosphate acyltransferase from Agrobacterium fabrum (strain C58 / ATCC 33970) (Agrobacterium tumefaciens (strain C58)).